We begin with the raw amino-acid sequence, 919 residues long: MEYKNTLNLPKTSFPMKANLVNKEKVFLEEWEKMDLYNYVLEQRKGKPLFVLHDGPPYANGHIHIGTALNKILKDIVVKYKTMRGYRAPYVPGWDTHGLPIEHRVSQELGEKIKEMSPAEIRKKCEEFALRFVDIQREEFKRLGVRGDWENPYITLKPDYEVKILDVFKTLVEQGNVYRSLKPIYWCPRCRTALAEAEIEYHDHKSPSIYVKFRSKEDPNFFIVIWTTTPWTLPANVGIALHPDYEYSVVKVGEEKWVIATDLLDAFSKETGIDCSNVVEKIKGKDLEGKEFVHPIFDDRTSRVILADYVSLETGTGCVHIAPGHGEEDYIYGHVQYGLPIVSPVDEEGRFTEEAGKYKGMFIEDANEVIIEDLKRKGILVHASSITHSYPHCWRCKGPVIFRATEQWFISVDHNNLRQKVLEEIDKVKWIPEWGRNRIRSMVEERPDWCISRQRVWGTPIPAVKCKECGEVVLDPKVIEHFMKIVEKEGTNAWFEKEVEELIPEDFVCPKCGKRSFEKMLDTLDVWIDSGASFEYITTKREDHPFPLDMYLEGSDQHRGWFHSSIFLAVAKRGSAPYKEVLTHGFIKDEQGRKMSKSLGNVVDPMEVVEKYGAEILRLWLASSDYFNDIKISMRIVEQQTEVYRKIRNTFRFLLGNLEDFDPELDRVPHEKLLTIDRWALGRLQEIIKRATEYYDSYEFSKVYNLVVKYCTTELSSLYLDVVKDRLYVEAKDSIYRRSAQTVMHEILISLMKILAPIMTFTMEEVYSHLHEKDRKYKTVQAEYWPEYREEFIDRKLMEDFEKLLSIREDVLKALEEKRQQDVIGHSLDAEVVLVPKNDTIKALLEKYRDILEELFIVSKVSLSDASGELKGELVEVTVKHAEGEKCQRCWKYTTEISASEDFPGVCPRCLAVLKGERK.

The short motif at 57–67 (PYANGHIHIGT) is the 'HIGH' region element. Glutamate 553 provides a ligand contact to L-isoleucyl-5'-AMP. A 'KMSKS' region motif is present at residues 594 to 598 (KMSKS). Lysine 597 contributes to the ATP binding site. Residues cysteine 887, cysteine 890, cysteine 907, and cysteine 910 each coordinate Zn(2+).

Belongs to the class-I aminoacyl-tRNA synthetase family. IleS type 1 subfamily. Monomer. It depends on Zn(2+) as a cofactor.

The protein localises to the cytoplasm. It carries out the reaction tRNA(Ile) + L-isoleucine + ATP = L-isoleucyl-tRNA(Ile) + AMP + diphosphate. In terms of biological role, catalyzes the attachment of isoleucine to tRNA(Ile). As IleRS can inadvertently accommodate and process structurally similar amino acids such as valine, to avoid such errors it has two additional distinct tRNA(Ile)-dependent editing activities. One activity is designated as 'pretransfer' editing and involves the hydrolysis of activated Val-AMP. The other activity is designated 'posttransfer' editing and involves deacylation of mischarged Val-tRNA(Ile). This is Isoleucine--tRNA ligase from Thermotoga maritima (strain ATCC 43589 / DSM 3109 / JCM 10099 / NBRC 100826 / MSB8).